The primary structure comprises 304 residues: Putative S-adenosyl-L-methionine-dependent methyltransferase MAV_4236 (304 aa).

S-adenosyl-L-methionine-binding positions include D129 and D158–L159.

Belongs to the UPF0677 family.

Its function is as follows. Exhibits S-adenosyl-L-methionine-dependent methyltransferase activity. The chain is Putative S-adenosyl-L-methionine-dependent methyltransferase MAV_4236 from Mycobacterium avium (strain 104).